A 412-amino-acid polypeptide reads, in one-letter code: DnaJ homolog subfamily A member 2 (412 aa).

Residues 8 to 70 (KLYDILGVPP…EKRELYDRYG (63 aa)) enclose the J domain. Lysine 39 bears the N6-acetyllysine mark. Serine 78 and serine 123 each carry phosphoserine. Residues 130–214 (GKTTKLQLSK…CEGKKVIKEV (85 aa)) form a CR-type zinc finger. Lysine 134 is covalently cross-linked (Glycyl lysine isopeptide (Lys-Gly) (interchain with G-Cter in SUMO2)). Cysteine 143 and cysteine 146 together coordinate Zn(2+). The stretch at 143 to 150 (CSACSGQG) is one CXXCXGXG motif repeat. At lysine 152 the chain carries N6-acetyllysine. Zn(2+) contacts are provided by cysteine 159, cysteine 162, cysteine 186, cysteine 189, cysteine 202, and cysteine 205. 3 CXXCXGXG motif repeats span residues 159 to 166 (CSACRGRG), 186 to 193 (CSDCNGEG), and 202 to 209 (CKKCEGKK). The segment at 365 to 412 (IGETEEVELQEFDSTRGSGGGQRREAYNDSSDEESSSHHGPGVQCAHQ) is disordered. Tyrosine 391 carries the post-translational modification Phosphotyrosine. A phosphoserine mark is found at serine 394 and serine 395. Cysteine 409 bears the Cysteine methyl ester mark. Cysteine 409 carries S-farnesyl cysteine lipidation. Positions 410–412 (AHQ) are cleaved as a propeptide — removed in mature form.

It is found in the membrane. In terms of biological role, co-chaperone of Hsc70. Stimulates ATP hydrolysis and the folding of unfolded proteins mediated by HSPA1A/B (in vitro). The polypeptide is DnaJ homolog subfamily A member 2 (Dnaja2) (Rattus norvegicus (Rat)).